The sequence spans 227 residues: UPF0688 protein C1orf174 homolog (227 aa).

Disordered regions lie at residues 1 to 122 (MRKR…VSDL) and 207 to 227 (AKEEDEDDDDYVDGLANEGNI). The span at 47-63 (TEKESSKKLRKDEKGPV) shows a compositional bias: basic and acidic residues. Polar residues-rich tracts occupy residues 77 to 104 (AASNESSNVNDSQQSEKSITNTKDNGTR) and 113 to 122 (RLPSSPVSDL).

Belongs to the UPF0688 family.

It is found in the nucleus. In Xenopus tropicalis (Western clawed frog), this protein is UPF0688 protein C1orf174 homolog.